Here is a 239-residue protein sequence, read N- to C-terminus: Fatty acid metabolism regulator protein (239 aa).

The HTH gntR-type domain occupies 6–74 (QSPAGFAEEY…HGKPTKVNNF (69 aa)). Residues 34-53 (ERELSELIGVTRTTLREVLQ) constitute a DNA-binding region (H-T-H motif).

As to quaternary structure, homodimer.

Its subcellular location is the cytoplasm. Multifunctional regulator of fatty acid metabolism. The polypeptide is Fatty acid metabolism regulator protein (Klebsiella pneumoniae (strain 342)).